The sequence spans 354 residues: Probable disease resistance protein At5g45490 (354 aa).

A coiled-coil region spans residues A33–E53. The region spanning E45–M122 is the NB-ARC domain. ATP is bound at residue G91–T98. Residues D328–S354 form a disordered region. Positions T337–S354 are enriched in polar residues.

Possible disease resistance protein. The sequence is that of Probable disease resistance protein At5g45490 from Arabidopsis thaliana (Mouse-ear cress).